We begin with the raw amino-acid sequence, 306 residues long: Apolipoprotein E (306 aa).

A signal peptide spans 1-18 (MKVLWAVLVVTLLAGCQA). Repeat copies occupy residues 81 to 102 (VLME…QELG), 103 to 124 (PMAE…ARLG), 125 to 146 (ADME…TMLG), 147 to 168 (QSAE…KRLL), 169 to 190 (RDAE…EGAE), 191 to 212 (RGVS…LRAA), 213 to 230 (QTSQ…ERLR), and 231 to 252 (GRLE…EQME). Positions 81–252 (VLMEDTMKEV…RLDVVREQME (172 aa)) are 8 X 22 AA approximate tandem repeats. The residue at position 144 (methionine 144) is a Methionine sulfoxide. The residue at position 148 (serine 148) is a Phosphoserine. Residues 159–169 (HLRKLRKRLLR) form an LDL and other lipoprotein receptors binding region. 163-166 (LRKR) contributes to the heparin binding site. Residues 211 to 280 (AAQTSQPLRE…GWFEPVVEDM (70 aa)) form a lipid-binding and lipoprotein association region. 226 to 233 (GERLRGRL) contributes to the heparin binding site. Positions 268-280 (RLKGWFEPVVEDM) are specificity for association with VLDL.

The protein belongs to the apolipoprotein A1/A4/E family. As to quaternary structure, homotetramer. May interact with ABCA1; functionally associated with ABCA1 in the biogenesis of HDLs. May interact with APP/A4 amyloid-beta peptide; the interaction is extremely stable in vitro but its physiological significance is unclear. May interact with MAPT. May interact with MAP2. In the cerebrospinal fluid, interacts with secreted SORL1. Interacts with PMEL; this allows the loading of PMEL luminal fragment on ILVs to induce fibril nucleation. APOE exists as multiple glycosylated and sialylated glycoforms within cells and in plasma. The extent of glycosylation and sialylation are tissue and context specific. Post-translationally, glycated in plasma VLDL. In terms of processing, phosphorylated by FAM20C in the extracellular medium.

It localises to the secreted. It is found in the extracellular space. The protein resides in the extracellular matrix. Its subcellular location is the extracellular vesicle. The protein localises to the endosome. It localises to the multivesicular body. APOE is an apolipoprotein, a protein associating with lipid particles, that mainly functions in lipoprotein-mediated lipid transport between organs via the plasma and interstitial fluids. APOE is a core component of plasma lipoproteins and is involved in their production, conversion and clearance. Apolipoproteins are amphipathic molecules that interact both with lipids of the lipoprotein particle core and the aqueous environment of the plasma. As such, APOE associates with chylomicrons, chylomicron remnants, very low density lipoproteins (VLDL) and intermediate density lipoproteins (IDL) but shows a preferential binding to high-density lipoproteins (HDL). It also binds a wide range of cellular receptors including the LDL receptor/LDLR, the LDL receptor-related proteins LRP1, LRP2 and LRP8 and the very low-density lipoprotein receptor/VLDLR that mediate the cellular uptake of the APOE-containing lipoprotein particles. Finally, APOE also has a heparin-binding activity and binds heparan-sulfate proteoglycans on the surface of cells, a property that supports the capture and the receptor-mediated uptake of APOE-containing lipoproteins by cells. A main function of APOE is to mediate lipoprotein clearance through the uptake of chylomicrons, VLDLs, and HDLs by hepatocytes. APOE is also involved in the biosynthesis by the liver of VLDLs as well as their uptake by peripheral tissues ensuring the delivery of triglycerides and energy storage in muscle, heart and adipose tissues. By participating in the lipoprotein-mediated distribution of lipids among tissues, APOE plays a critical role in plasma and tissues lipid homeostasis. APOE is also involved in two steps of reverse cholesterol transport, the HDLs-mediated transport of cholesterol from peripheral tissues to the liver, and thereby plays an important role in cholesterol homeostasis. First, it is functionally associated with ABCA1 in the biogenesis of HDLs in tissues. Second, it is enriched in circulating HDLs and mediates their uptake by hepatocytes. APOE also plays an important role in lipid transport in the central nervous system, regulating neuron survival and sprouting. The polypeptide is Apolipoprotein E (APOE) (Hystrix brachyura (Malayan porcupine)).